Consider the following 100-residue polypeptide: Aspartyl/glutamyl-tRNA(Asn/Gln) amidotransferase subunit C (100 aa).

This sequence belongs to the GatC family. As to quaternary structure, heterotrimer of A, B and C subunits.

The catalysed reaction is L-glutamyl-tRNA(Gln) + L-glutamine + ATP + H2O = L-glutaminyl-tRNA(Gln) + L-glutamate + ADP + phosphate + H(+). It carries out the reaction L-aspartyl-tRNA(Asn) + L-glutamine + ATP + H2O = L-asparaginyl-tRNA(Asn) + L-glutamate + ADP + phosphate + 2 H(+). In terms of biological role, allows the formation of correctly charged Asn-tRNA(Asn) or Gln-tRNA(Gln) through the transamidation of misacylated Asp-tRNA(Asn) or Glu-tRNA(Gln) in organisms which lack either or both of asparaginyl-tRNA or glutaminyl-tRNA synthetases. The reaction takes place in the presence of glutamine and ATP through an activated phospho-Asp-tRNA(Asn) or phospho-Glu-tRNA(Gln). The polypeptide is Aspartyl/glutamyl-tRNA(Asn/Gln) amidotransferase subunit C (Streptococcus sanguinis (strain SK36)).